A 242-amino-acid chain; its full sequence is Glucosamine-6-phosphate deaminase (242 aa).

Residue Asp67 is the Proton acceptor; for enolization step of the active site. Asn136 serves as the catalytic For ring-opening step. The Proton acceptor; for ring-opening step role is filled by His138. The active-site For ring-opening step is Glu143.

This sequence belongs to the glucosamine/galactosamine-6-phosphate isomerase family. NagB subfamily.

The enzyme catalyses alpha-D-glucosamine 6-phosphate + H2O = beta-D-fructose 6-phosphate + NH4(+). It participates in amino-sugar metabolism; N-acetylneuraminate degradation; D-fructose 6-phosphate from N-acetylneuraminate: step 5/5. Catalyzes the reversible isomerization-deamination of glucosamine 6-phosphate (GlcN6P) to form fructose 6-phosphate (Fru6P) and ammonium ion. The chain is Glucosamine-6-phosphate deaminase from Clostridium perfringens (strain SM101 / Type A).